Here is a 367-residue protein sequence, read N- to C-terminus: 2-aminoethylphosphonate--pyruvate transaminase (367 aa).

N6-(pyridoxal phosphate)lysine is present on K194.

The protein belongs to the class-V pyridoxal-phosphate-dependent aminotransferase family. PhnW subfamily. Homodimer. The cofactor is pyridoxal 5'-phosphate.

It catalyses the reaction (2-aminoethyl)phosphonate + pyruvate = phosphonoacetaldehyde + L-alanine. Its function is as follows. Involved in phosphonate degradation. The chain is 2-aminoethylphosphonate--pyruvate transaminase from Salmonella heidelberg (strain SL476).